The following is a 1300-amino-acid chain: ATP-dependent RNA helicase HrpA (1300 aa).

The 164-residue stretch at 87 to 250 (LEAIRDHQVV…FNNAPIIEVS (164 aa)) folds into the Helicase ATP-binding domain. 100–107 (GETGSGKT) is a binding site for ATP. Positions 197 to 200 (DEAH) match the DEAH box motif. Residues 274–444 (QLQAIFDAVD…SVILQMTALG (171 aa)) enclose the Helicase C-terminal domain.

The protein belongs to the DEAD box helicase family. DEAH subfamily.

It carries out the reaction ATP + H2O = ADP + phosphate + H(+). Not yet known. The polypeptide is ATP-dependent RNA helicase HrpA (hrpA) (Escherichia coli (strain K12)).